The following is a 227-amino-acid chain: ATP-dependent dethiobiotin synthetase BioD (227 aa).

An ATP-binding site is contributed by 13–18 (NIGKTV). T17 is a Mg(2+) binding site. K38 is an active-site residue. ATP contacts are provided by residues D55 and 116–119 (EGIG). 2 residues coordinate Mg(2+): D55 and E116.

It belongs to the dethiobiotin synthetase family. In terms of assembly, homodimer. The cofactor is Mg(2+).

It is found in the cytoplasm. The catalysed reaction is (7R,8S)-7,8-diammoniononanoate + CO2 + ATP = (4R,5S)-dethiobiotin + ADP + phosphate + 3 H(+). It participates in cofactor biosynthesis; biotin biosynthesis; biotin from 7,8-diaminononanoate: step 1/2. Catalyzes a mechanistically unusual reaction, the ATP-dependent insertion of CO2 between the N7 and N8 nitrogen atoms of 7,8-diaminopelargonic acid (DAPA, also called 7,8-diammoniononanoate) to form a ureido ring. The protein is ATP-dependent dethiobiotin synthetase BioD of Buchnera aphidicola subsp. Baizongia pistaciae (strain Bp).